A 473-amino-acid polypeptide reads, in one-letter code: Serine incorporator 3 (473 aa).

Topologically, residues 1–96 (MGAVLGVFSL…KDCDVLVGYK (96 aa)) are extracellular. Residue Asn34 is glycosylated (N-linked (GlcNAc...) asparagine). A helical transmembrane segment spans residues 97–117 (AVYRISFAMAIFFFVFSLLMF). The Cytoplasmic portion of the chain corresponds to 118 to 132 (KVKTSKDLRAAVHNG). Residues 133-153 (FWFFKIAALIGIMVGSFYIPG) traverse the membrane as a helical segment. At 154–159 (GYFSSV) the chain is on the extracellular side. Residues 160 to 180 (WFVVGMIGAALFILIQLVLLV) form a helical membrane-spanning segment. Topologically, residues 181–203 (DFAHSWNESWVNRMEEGNPRLWY) are cytoplasmic. Residues 204-224 (AALLSFTSAFYILSIICVGLL) traverse the membrane as a helical segment. The Extracellular segment spans residues 225–239 (YTYYTKPDGCTENKF). The chain crosses the membrane as a helical span at residues 240–260 (FISINLILCVVASIISIHPKI). Over 261–329 (QEHQPRSGLL…VPTPTPPSKS (69 aa)) the chain is Cytoplasmic. A helical membrane pass occupies residues 330–350 (GSLLDSDNFIGLFVFVLCLLY). Residues 351–406 (SSIRTSTNSQVDKLTLSGSDSVILGDTTTSGASDEEDGQPRRAVDNEKEGVQYSYS) are Extracellular-facing. Ser371 is subject to Phosphoserine. Residues 407–427 (LFHLMLCLASLYIMMTLTSWY) traverse the membrane as a helical segment. Residues 428–446 (SPDAKFQSMTSKWPAVWVK) are Cytoplasmic-facing. The helical transmembrane segment at 447–467 (ISSSWVCLLLYVWTLVAPLVL) threads the bilayer. Residues 468–473 (TSRDFS) are Extracellular-facing.

It belongs to the TDE1 family. N-glycosylated. In terms of tissue distribution, ubiquitous. Expression levels were increased fourfold to tenfold in lung tumor tissues compared with normal pulmonary tissues.

It is found in the cell membrane. It localises to the golgi apparatus membrane. The protein resides in the cytoplasm. Its subcellular location is the perinuclear region. It carries out the reaction a 1,2-diacyl-sn-glycero-3-phospho-L-serine(in) = a 1,2-diacyl-sn-glycero-3-phospho-L-serine(out). The enzyme catalyses a 1,2-diacyl-sn-glycero-3-phosphocholine(in) = a 1,2-diacyl-sn-glycero-3-phosphocholine(out). It catalyses the reaction a 1,2-diacyl-sn-glycero-3-phosphoethanolamine(in) = a 1,2-diacyl-sn-glycero-3-phosphoethanolamine(out). Functionally, restriction factor required to restrict infectivity of lentiviruses, such as HIV-1: acts by inhibiting an early step of viral infection. Impairs the penetration of the viral particle into the cytoplasm. Non-ATP-dependent, non-specific lipid transporter for phosphatidylserine, phosphatidylcholine, and phosphatidylethanolamine. Functions as a scramblase that flips lipids in both directions across the membrane. Phospholipid scrambling results in HIV-1 surface exposure of phosphatidylserine and loss of membrane asymmetry, which leads to changes in HIV-1 Env conformation and loss of infectivity. This Homo sapiens (Human) protein is Serine incorporator 3.